Reading from the N-terminus, the 139-residue chain is Transcription antitermination protein NusB (139 aa).

Belongs to the NusB family.

In terms of biological role, involved in transcription antitermination. Required for transcription of ribosomal RNA (rRNA) genes. Binds specifically to the boxA antiterminator sequence of the ribosomal RNA (rrn) operons. The chain is Transcription antitermination protein NusB from Erwinia tasmaniensis (strain DSM 17950 / CFBP 7177 / CIP 109463 / NCPPB 4357 / Et1/99).